Reading from the N-terminus, the 1377-residue chain is DNA-directed RNA polymerase subunit beta (1377 aa).

It belongs to the RNA polymerase beta chain family. As to quaternary structure, the RNAP catalytic core consists of 2 alpha, 1 beta, 1 beta' and 1 omega subunit. When a sigma factor is associated with the core the holoenzyme is formed, which can initiate transcription.

The catalysed reaction is RNA(n) + a ribonucleoside 5'-triphosphate = RNA(n+1) + diphosphate. Functionally, DNA-dependent RNA polymerase catalyzes the transcription of DNA into RNA using the four ribonucleoside triphosphates as substrates. The protein is DNA-directed RNA polymerase subunit beta of Campylobacter lari (strain RM2100 / D67 / ATCC BAA-1060).